We begin with the raw amino-acid sequence, 214 residues long: Adenylate kinase (214 aa).

10 to 15 (GAGKGT) lines the ATP pocket. An NMP region spans residues 30 to 59 (STGDMLRAAVKSGSELGKQAKDIMDAGKLV). AMP contacts are provided by residues Thr-31, Arg-36, 57 to 59 (KLV), 85 to 88 (GFPR), and Gln-92. The LID stretch occupies residues 122–159 (GRRVHAPSGRVYHVKFNPPKVEGKDDVTGEELTTRKDD). ATP is bound by residues Arg-123 and 132–133 (VY). The AMP site is built by Arg-156 and Arg-167. Lys-192 carries the post-translational modification N6-acetyllysine. Lys-200 is an ATP binding site.

The protein belongs to the adenylate kinase family. As to quaternary structure, monomer.

The protein localises to the cytoplasm. The catalysed reaction is AMP + ATP = 2 ADP. The protein operates within purine metabolism; AMP biosynthesis via salvage pathway; AMP from ADP: step 1/1. Catalyzes the reversible transfer of the terminal phosphate group between ATP and AMP. Plays an important role in cellular energy homeostasis and in adenine nucleotide metabolism. The polypeptide is Adenylate kinase (Escherichia coli O8 (strain IAI1)).